Consider the following 102-residue polypeptide: MNKIRKGDEVIVITGKDKGKRGVVLSVGEGKVIVEGINLVKKHVKPNPMKGTTGGVEAKTMPLQISNVALVDANGKASRVGIKVEGDKKIRFLKTTGAELSA.

The protein belongs to the universal ribosomal protein uL24 family. In terms of assembly, part of the 50S ribosomal subunit.

Functionally, one of two assembly initiator proteins, it binds directly to the 5'-end of the 23S rRNA, where it nucleates assembly of the 50S subunit. One of the proteins that surrounds the polypeptide exit tunnel on the outside of the subunit. This chain is Large ribosomal subunit protein uL24, found in Paraburkholderia xenovorans (strain LB400).